The primary structure comprises 266 residues: GATA-type zinc finger protein 1 (266 aa).

3 disordered regions span residues 1 to 31, 106 to 129, and 171 to 191; these read MEAA…KSRP, TQCP…PRKQ, and CSQK…SSEA. A compositionally biased stretch (polar residues) spans 106 to 121; that stretch reads TQCPNLEISSATSPAS. Residues 197 to 221 form a GATA-type zinc finger; sequence CASCRTQRTPLWRDAEDGTPLCNAC.

As to expression, specifically expressed in adult testis and ovary. Expressed at high levels in the somatic cells of the developing gonads, including Leydig cells in the testes and granulosa cells in the ovaries.

It is found in the nucleus. In terms of biological role, transcriptional regulator that plays a key role in germ cell development. Determines the oogenic fate by activating key genes for the oogenic program and meiotic prophase entry. Acts downstream of bone morphogenetic protein (BMP) by regulating expression of genes required for the oogenic programs, which are repressed by Polycomb activities in sexually uncommitted germ cells. Regulates expression of STRA8, a central downstream effector for the meiotic program. Acts independently of retinoic acid (RA). In males, not required for germ-cell sex determination, but required to allow the spermatogonia to efficiently accomplish the meiotic prophase. This chain is GATA-type zinc finger protein 1, found in Mus musculus (Mouse).